The sequence spans 316 residues: Ribonuclease Z (316 aa).

Zn(2+) is bound by residues His-63, His-65, Asp-67, His-68, His-143, Asp-213, and His-271. The active-site Proton acceptor is the Asp-67.

It belongs to the RNase Z family. Homodimer. It depends on Zn(2+) as a cofactor.

It carries out the reaction Endonucleolytic cleavage of RNA, removing extra 3' nucleotides from tRNA precursor, generating 3' termini of tRNAs. A 3'-hydroxy group is left at the tRNA terminus and a 5'-phosphoryl group is left at the trailer molecule.. Functionally, zinc phosphodiesterase, which displays some tRNA 3'-processing endonuclease activity. Probably involved in tRNA maturation, by removing a 3'-trailer from precursor tRNA. The protein is Ribonuclease Z of Bacteroides thetaiotaomicron (strain ATCC 29148 / DSM 2079 / JCM 5827 / CCUG 10774 / NCTC 10582 / VPI-5482 / E50).